The chain runs to 168 residues: Cytochrome c oxidase subunit 2 (168 aa).

Residues 1–3 lie on the Cytoplasmic side of the membrane; the sequence is MVD. Residues 4–38 traverse the membrane as a helical segment; the sequence is EHKAHKAILAYEKGWLAFSLAMLFVFIALIAYTLA. Residues 39–168 lie on the Periplasmic side of the membrane; that stretch reads THTAGVIPAG…NMFGTIVVKE (130 aa). Cu cation is bound by residues histidine 114, cysteine 149, cysteine 153, and histidine 157.

Belongs to the cytochrome c oxidase subunit 2 family.

The protein localises to the cell membrane. It carries out the reaction 4 Fe(II)-[cytochrome c] + O2 + 8 H(+)(in) = 4 Fe(III)-[cytochrome c] + 2 H2O + 4 H(+)(out). In terms of biological role, subunits I and II form the functional core of the enzyme complex. Electrons originating in cytochrome c are transferred via heme a and Cu(A) to the binuclear center formed by heme a3 and Cu(B). The protein is Cytochrome c oxidase subunit 2 (cbaB) of Thermus thermophilus (strain ATCC 27634 / DSM 579 / HB8).